A 623-amino-acid chain; its full sequence is Aspartate--tRNA(Asp/Asn) ligase (623 aa).

Position 175 (Glu175) interacts with L-aspartate. The interval 199 to 202 is aspartate; that stretch reads QQYK. 2 residues coordinate L-aspartate: Arg221 and His483. Residue 221–223 participates in ATP binding; the sequence is RDE. Glu517 provides a ligand contact to ATP. Arg524 is an L-aspartate binding site. An ATP-binding site is contributed by 569 to 572; that stretch reads GVDR.

The protein belongs to the class-II aminoacyl-tRNA synthetase family. Type 1 subfamily. In terms of assembly, homodimer.

Its subcellular location is the cytoplasm. The enzyme catalyses tRNA(Asx) + L-aspartate + ATP = L-aspartyl-tRNA(Asx) + AMP + diphosphate. Its function is as follows. Aspartyl-tRNA synthetase with relaxed tRNA specificity since it is able to aspartylate not only its cognate tRNA(Asp) but also tRNA(Asn). Reaction proceeds in two steps: L-aspartate is first activated by ATP to form Asp-AMP and then transferred to the acceptor end of tRNA(Asp/Asn). The polypeptide is Aspartate--tRNA(Asp/Asn) ligase (Xanthobacter autotrophicus (strain ATCC BAA-1158 / Py2)).